The chain runs to 112 residues: MREPDRTPIQRRDILTGKLKQDSGGESRFLHISSAIVTARPDRAADLARHFATLPGTEVHAVQGAKIVLVLEGASVGEIRQPHGAISVMEGVFSANLVFEQILPADEREALS.

This sequence belongs to the NapD family. In terms of assembly, interacts with the cytoplasmic NapA precursor.

It is found in the cytoplasm. In terms of biological role, chaperone for NapA, the catalytic subunit of the periplasmic nitrate reductase. It binds directly and specifically to the twin-arginine signal peptide of NapA, preventing premature interaction with the Tat translocase and premature export. This is Chaperone NapD from Paracoccus pantotrophus (Thiosphaera pantotropha).